The following is a 428-amino-acid chain: Glutamate-1-semialdehyde 2,1-aminomutase 1 (428 aa).

Lys267 bears the N6-(pyridoxal phosphate)lysine mark.

It belongs to the class-III pyridoxal-phosphate-dependent aminotransferase family. HemL subfamily. Homodimer. It depends on pyridoxal 5'-phosphate as a cofactor.

The protein localises to the cytoplasm. The enzyme catalyses (S)-4-amino-5-oxopentanoate = 5-aminolevulinate. It functions in the pathway porphyrin-containing compound metabolism; protoporphyrin-IX biosynthesis; 5-aminolevulinate from L-glutamyl-tRNA(Glu): step 2/2. In Staphylococcus aureus (strain MW2), this protein is Glutamate-1-semialdehyde 2,1-aminomutase 1.